We begin with the raw amino-acid sequence, 176 residues long: Transcription factor E (176 aa).

One can recognise an HTH TFE/IIEalpha-type domain in the interval 5–89 (IDQLMKDMAR…YWKANVDQIN (85 aa)).

It belongs to the TFE family. In terms of assembly, monomer. Interaction with RNA polymerase subunits RpoF and RpoE is necessary for Tfe stimulatory transcription activity. Able to interact with Tbp and RNA polymerase in the absence of DNA promoter. Interacts both with the preinitiation and elongation complexes.

Functionally, transcription factor that plays a role in the activation of archaeal genes transcribed by RNA polymerase. Facilitates transcription initiation by enhancing TATA-box recognition by TATA-box-binding protein (Tbp), and transcription factor B (Tfb) and RNA polymerase recruitment. Not absolutely required for transcription in vitro, but particularly important in cases where Tbp or Tfb function is not optimal. It dynamically alters the nucleic acid-binding properties of RNA polymerases by stabilizing the initiation complex and destabilizing elongation complexes. Seems to translocate with the RNA polymerase following initiation and acts by binding to the non template strand of the transcription bubble in elongation complexes. The protein is Transcription factor E of Metallosphaera sedula (strain ATCC 51363 / DSM 5348 / JCM 9185 / NBRC 15509 / TH2).